The sequence spans 279 residues: Thymidylate synthase (279 aa).

132–133 (RR) serves as a coordination point for dUMP. The active-site Nucleophile is cysteine 153. Residues 178–181 (RSND), asparagine 189, and 219–221 (HIY) contribute to the dUMP site. Aspartate 181 provides a ligand contact to (6R)-5,10-methylene-5,6,7,8-tetrahydrofolate. Alanine 278 provides a ligand contact to (6R)-5,10-methylene-5,6,7,8-tetrahydrofolate.

The protein belongs to the thymidylate synthase family. Bacterial-type ThyA subfamily. As to quaternary structure, homodimer.

The protein resides in the cytoplasm. The enzyme catalyses dUMP + (6R)-5,10-methylene-5,6,7,8-tetrahydrofolate = 7,8-dihydrofolate + dTMP. Its pathway is pyrimidine metabolism; dTTP biosynthesis. In terms of biological role, catalyzes the reductive methylation of 2'-deoxyuridine-5'-monophosphate (dUMP) to 2'-deoxythymidine-5'-monophosphate (dTMP) while utilizing 5,10-methylenetetrahydrofolate (mTHF) as the methyl donor and reductant in the reaction, yielding dihydrofolate (DHF) as a by-product. This enzymatic reaction provides an intracellular de novo source of dTMP, an essential precursor for DNA biosynthesis. This Lactococcus lactis subsp. cremoris (strain SK11) protein is Thymidylate synthase.